Reading from the N-terminus, the 249-residue chain is MEISHILEDLVYDNGVLPREAIEAAIVKHNQITPYLLKILEEAIDHVSDIIDDDCYQGHLYAMYLLAQFRETRALPLIIKLFSFEQDIPHAIAGDVLTEDLSRILASVCDDVSLIQELIETPRVNPYVQAAAISSLVSLVGVKKLSRGAAIRYFGELLNYRLEKRPSFAWDSLVASICALYPKELFYPISKAFSAGLIDKSFISMEDVETIIHEESIDSCLQEVFSSTDLIDDTLEEMEKWLERFPFES.

This sequence belongs to the chlamydial CPn_0206/CT203/TC_0475 family.

This is an uncharacterized protein from Chlamydia muridarum (strain MoPn / Nigg).